The primary structure comprises 542 residues: Cytochrome P450 monooxygenase sdnH (542 aa).

Residues 25-45 traverse the membrane as a helical segment; that stretch reads LYVAGGILGAFTVYSIILVVY. The segment at 141 to 160 is disordered; sequence IIPPRGLGQEDSIGSTRSHD. Residues 340–360 form a helical membrane-spanning segment; the sequence is FMGAGTYPTAATLIFVAYYIL. Cysteine 483 serves as a coordination point for heme. N-linked (GlcNAc...) asparagine glycosylation occurs at asparagine 506.

This sequence belongs to the cytochrome P450 family. It depends on heme as a cofactor.

The protein resides in the membrane. Its pathway is antibiotic biosynthesis. Cytochrome P450 monooxygenase; part of the gene cluster that mediates the biosynthesis of sordarin and hypoxysordarin, glycoside antibiotics with a unique tetracyclic diterpene aglycone structure. First, the geranylgeranyl diphosphate synthase sdnC constructs GGDP from farnesyl diphosphate and isopentenyl diphosphate. The diterpene cyclase sdnA then catalyzes the cyclization of GGDP to afford cycloaraneosene. Cycloaraneosene is then hydroxylated four times by the putative cytochrome P450 monooxygenases sdnB, sdnE, sdnF and sdnH to give a hydroxylated cycloaraneosene derivative such as cycloaraneosene-8,9,13,19-tetraol. Although the order of the hydroxylations is unclear, at least C8, C9 and C13 of the cycloaraneosene skeleton are hydroxylated before the sordaricin formation. Dehydration of the 13-hydroxy group of the hydroxylated cycloaraneosene derivative might be catalyzed by an unassigned hypothetical protein such as sdnG and sdnP to construct the cyclopentadiene moiety. The FAD-dependent oxidoreductase sdnN is proposed to catalyze the oxidation at C9 of the hydroxylated cycloaraneosene derivative and also catalyze the Baeyer-Villiger oxidation to give the lactone intermediate. The presumed lactone intermediate would be hydrolyzed to give an acrolein moiety and a carboxylate moiety. Then, [4+2]cycloaddition would occur between the acrolein moiety and the cyclopentadiene moiety to give sordaricin. SdnN might also be involved in the [4+2]cycloaddition after the hypothesized oxidation to accommodate the oxidized product and prompt the [4+2]cycloaddition. GDP-6-deoxy-D-altrose may be biosynthesized from GDP-D-mannose by the putative GDP-mannose-4,6-dehydratase sdnI and the short-chain dehydrogenase sdnK. The glycosyltransferase sdnJ catalyzes the attachment of 6-deoxy-D-altrose onto the 19-hydroxy group of sordaricin to give 4'-O-demethylsordarin. The methyltransferase sdnD would complete the biosynthesis of sordarin. Sordarin can be further modified into hypoxysordarin. The unique acyl chain at the 3'-hydroxy group of hypoxysordarin would be constructed by an iterative type I PKS sdnO and the trans-acting polyketide methyltransferase sdnL. SdnL would be responsible for the introduction of an alpha-methyl group of the polyketide chain. Alternatively, the beta-lactamase-like protein sdnR might be responsible for the cleavage and transfer of the polyketide chain from the PKS sdnO to sordarin. Two putative cytochrome P450 monooxygenases, sdnQ and sdnT, might catalyze the epoxidations of the polyketide chain to complete the biosynthesis of hypoxysordarin. Transcriptional regulators sdnM and sdnS are presumably encoded for the transcriptional regulation of the expression of the sdn gene cluster. In Sordaria araneosa (Pleurage araneosa), this protein is Cytochrome P450 monooxygenase sdnH.